The following is a 275-amino-acid chain: Methylglyoxal reductase DkgA (275 aa).

Tyr51 acts as the Proton donor in catalysis. His107 provides a ligand contact to substrate. Position 187-241 (Ser187–Asn241) interacts with NADP(+).

Belongs to the aldo/keto reductase family. In terms of assembly, monomer.

The protein resides in the cytoplasm. The enzyme catalyses hydroxyacetone + NADP(+) = methylglyoxal + NADPH + H(+). Functionally, aldo-keto reductase that significantly contributes to cellular methylglyoxal detoxification by catalyzing the NADPH-dependent conversion of methylglyoxal to acetol. In Salmonella typhimurium (strain LT2 / SGSC1412 / ATCC 700720), this protein is Methylglyoxal reductase DkgA.